The primary structure comprises 297 residues: MEPSGSKKGRAEEPREEVECQMSSQPSTSSAKTKATGKKQRKSEKDDGCKPEEKSAQDPETPGHARRKVPVPPFPQHLPPVNLIHRDVLRAWCQEMKLSSKGQKLDAYKRLLARAFPDQMPELKNVPDSAKEARLKMPRKKMKTEPGEESQVTVPLEIVTVPEEQIPALVDPPVLYEEVSTTVVTTSASEAVLASWARIAANAKKLEAVPSNATSETYGSTGEMWCVVHGTSLPATSSGWVRLQFHAGQAWVPDKKGKAIALFLLPACTFPPPHLEDNMLCPKCVHKNKILTKSLEG.

The tract at residues Met1 to His77 is disordered. Positions Ser23 to Lys34 are enriched in low complexity. A compositionally biased stretch (basic and acidic residues) spans Ser43–Gly63. Position 211 is a phosphoserine (Ser211).

Interacts with DPPA2. Interacts with PCGF1.

It localises to the nucleus. In terms of biological role, may be involved in the maintenance of active epigenetic status of target genes. May inhibit differentiation of embryonic stem (ES) cells into a primitive ectoderm lineage. The chain is Developmental pluripotency-associated protein 4 (Dppa4) from Rattus norvegicus (Rat).